The primary structure comprises 491 residues: Serine/threonine-protein kinase 33 (491 aa).

The segment at 51–89 is disordered; sequence FASQERKKERNTSRESSLKDLSIRTSNVERKPQAQWSRS. Positions 54-82 are enriched in basic and acidic residues; the sequence is QERKKERNTSRESSLKDLSIRTSNVERKP. The 267-residue stretch at 111 to 377 folds into the Protein kinase domain; sequence YTFGRILGQG…AKELLDNQWL (267 aa). ATP contacts are provided by residues 117–125 and lysine 140; that span reads LGQGSFGMV. Aspartate 233 serves as the catalytic Proton acceptor. The tract at residues 398–491 is disordered; it reads KNNPESDEET…TTLFRGKKRL (94 aa). A compositionally biased stretch (acidic residues) spans 402-414; it reads ESDEETNTDEETE. Serine 403 carries the phosphoserine modification. The segment covering 415–431 has biased composition (polar residues); sequence QSAVYSPSANTAKQPTN. Positions 445–457 are enriched in low complexity; it reads SSNSSSSKLLSAE. Residues 475–484 are compositionally biased toward polar residues; it reads AKTTLKSTTL.

It belongs to the protein kinase superfamily. CAMK Ser/Thr protein kinase family. CaMK subfamily. In terms of assembly, homodimer. Autophosphorylated. In terms of tissue distribution, highly expressed in testis, particularly in cells from the spermatogenic epithelia. Present in meiotic and post meiotic sperm cells. Significant expression is detected in lung epithelia, alveolar macrophages, horizontal cells in the retina and in embryonic organs such as heart, brain and spinal cord. Also expressed in pituitary gland, kidney, pancreas, trachea and thyroid gland.

Its subcellular location is the cytoplasm. It localises to the cytoskeleton. The protein resides in the perinuclear region. It catalyses the reaction L-seryl-[protein] + ATP = O-phospho-L-seryl-[protein] + ADP + H(+). The catalysed reaction is L-threonyl-[protein] + ATP = O-phospho-L-threonyl-[protein] + ADP + H(+). Its activity is regulated as follows. Specifically inhibited by CDD-2807 ((3-([1,1'-Biphenyl]-2-ylethynyl)-1H-indazol-5-yl)(2,6-diazaspiro[3.5]nonan-2-yl)methanone). CDD-2807 is a potential male contraceptive drug: it is not toxic, efficiently crosses the blood-testis barrier and induces a reversible contraceptive effect in male mice. In terms of biological role, serine/threonine protein kinase required for spermatid differentiation and male fertility. Promotes sperm flagella assembly during spermatogenesis by mediating phosphorylation of fibrous sheath proteins AKAP3 and AKAP4. Also phosphorylates vimentin/VIM, thereby regulating the dynamic behavior of the intermediate filament cytoskeleton. This chain is Serine/threonine-protein kinase 33, found in Mus musculus (Mouse).